Here is a 292-residue protein sequence, read N- to C-terminus: S-adenosyl-L-methionine-dependent Diels-Alderase iccD (292 aa).

The chain crosses the membrane as a helical span at residues 240–262 (LPVVRMFYVVLLVPYLFVRLLGI).

Belongs to the class I-like SAM-binding methyltransferase superfamily. Erg6/SMT family. The cofactor is S-adenosyl-L-methionine.

It localises to the membrane. The catalysed reaction is 3-[(2E,4E,8S,10E,12Z)-4,8-dimethyltetradeca-2,4,10,12-tetraenoyl]-4-hydroxy-5-(4-hydroxyphenyl)-1,2-dihydropyridin-2-one = 8-epi-ilicicolin H. Its pathway is mycotoxin biosynthesis. Its function is as follows. S-adenosyl-l-methionine-dependent Diels-Alderase; part of the gene cluster that mediates the biosynthesis of ilicicolin H, a 4-hydroxy-2-pyridonealkaloid that has potent and broad antifungal activities by inhibiting the mitochondrial respiration chain. IccD catalyzes the Diels-Alder reaction that converts the acyclic 2-pyridone intermediate to 8-epi-ilicicolin H. The biosynthesis of ilicicolin H starts with formation of the tetramic acid by the hybrid PKS-NRPS synthetase iccA with the partnering trans-enoyl reductase iccB since iccA lacks a designated enoylreductase (ER) domain. The cytochrome P450 monooxygenase iccC then catalyzes the ring expansion of the tetramate to the acyclic 2-pyridone. The pericyclase iccD further converts the acyclic 2-pyridone into 8-epi-ilicicolin H. Finally, the epimerase iccE converts 8-epi-ilicicolin H into ilicicolin H via epimerization. IccA to iccE are sufficient for ilicicolin H biosynthesis and the roles of the remaining enzymes, iccF, iccG and iccH within the pathway have still to be determined. This Talaromyces variabilis (Penicillium variabile) protein is S-adenosyl-L-methionine-dependent Diels-Alderase iccD.